A 48-amino-acid polypeptide reads, in one-letter code: ATP synthase protein 8 (48 aa).

A helical transmembrane segment spans residues L13–L32.

The protein belongs to the ATPase protein 8 family. In terms of assembly, F-type ATPases have 2 components, CF(1) - the catalytic core - and CF(0) - the membrane proton channel.

The protein resides in the mitochondrion membrane. Mitochondrial membrane ATP synthase (F(1)F(0) ATP synthase or Complex V) produces ATP from ADP in the presence of a proton gradient across the membrane which is generated by electron transport complexes of the respiratory chain. F-type ATPases consist of two structural domains, F(1) - containing the extramembraneous catalytic core and F(0) - containing the membrane proton channel, linked together by a central stalk and a peripheral stalk. During catalysis, ATP synthesis in the catalytic domain of F(1) is coupled via a rotary mechanism of the central stalk subunits to proton translocation. Part of the complex F(0) domain. Minor subunit located with subunit a in the membrane. In Kluyveromyces lactis (strain ATCC 8585 / CBS 2359 / DSM 70799 / NBRC 1267 / NRRL Y-1140 / WM37) (Yeast), this protein is ATP synthase protein 8 (ATP8).